The primary structure comprises 130 residues: Small ribosomal subunit protein uS11 (130 aa).

The protein belongs to the universal ribosomal protein uS11 family. As to quaternary structure, part of the 30S ribosomal subunit. Interacts with proteins S7 and S18. Binds to IF-3.

In terms of biological role, located on the platform of the 30S subunit, it bridges several disparate RNA helices of the 16S rRNA. Forms part of the Shine-Dalgarno cleft in the 70S ribosome. The protein is Small ribosomal subunit protein uS11 of Prochlorococcus marinus (strain MIT 9313).